A 930-amino-acid chain; its full sequence is MKLKDTLNLGKTAFPMRAGLPTKEPVWQKEWEDAKLYQRRQELNEGKPHFVLHDGPPYANGNIHVGHAMNHISKDIIIRSKSMSGFNAPYIPGWDTHGLPIEQVLAKQGVKRKEMDLVEYLKLCREYALSQVYKQRDDFKRLGMSGDWENLYVTLTPDYEAAQIRVFGEMANKGYIYRGAKPVYWSWSSESALAEAEIEYHDLVSTSLYYANKVKDGKGILDTDTYIVVWTTTPFTITASRGLTVGADIDYVLVQPASETRKFVVAAELLTSLSEKFGWADVQVLATYRGQELNHIVTEHPWDTAVDELVILGDHVTTDSGTGIVHTAPGFGEDDYNVGIANGLEVAVTVDERGIMMANAGPEFEGQFYDKVVPTVIEKLGNLLLAQEEISHSYPFDWRTKKPIIWRAVPQWFASVSKFRQEILDAIDKVKFHTEWGKVRLYNMIRDRGDWVISRQRAWGVPLPIFYAEDGTAIMTAETIEHVAQLFEVHGSSIWWERDAKDLLPEGFTHPGSPNGEFKKETDIMDVWFDSGSSWNGVLVNRPNLTYPADLYLEGSDQYRGWFNSSLITSVANHGVAPYKQILSQGFTLDGKGEKMSKSLGNTIAPSDVEKQFGAEILRLWVTSVDSSNDVRISMDILSQVSETYRKIRNTLRFLIANTSDFNPAQDVVAYDELRSVDKYMTIRFNQLVKTIRDAYADFEFLTIYKALVNFINVDLSAFYLDFAKDVVYIEGAKSLERRQMQTVFYDILVKITKLLTPILPHTAEEIWSYLEFEAEDFVQLSELPEAQTFANQEEVLDTWAAFMDFRGQAQKALEEARNAKVIGKSLEAHLTVYPNEVVKTLLEAVNSNVAQLLIVSDLTIAEGPAPEAAVSFEDVAFTVERAAGQVCDRCRRIDPTTAERSYQAVICDHCASIVEENFAEAVAEGFEEK.

A 'HIGH' region motif is present at residues 57-67 (PYANGNIHVGH). L-isoleucyl-5'-AMP is bound at residue Glu-554. A 'KMSKS' region motif is present at residues 595–599 (KMSKS). Lys-598 contacts ATP. 4 residues coordinate Zn(2+): Cys-888, Cys-891, Cys-908, and Cys-911.

Belongs to the class-I aminoacyl-tRNA synthetase family. IleS type 1 subfamily. Monomer. The cofactor is Zn(2+).

The protein resides in the cytoplasm. It catalyses the reaction tRNA(Ile) + L-isoleucine + ATP = L-isoleucyl-tRNA(Ile) + AMP + diphosphate. In terms of biological role, catalyzes the attachment of isoleucine to tRNA(Ile). As IleRS can inadvertently accommodate and process structurally similar amino acids such as valine, to avoid such errors it has two additional distinct tRNA(Ile)-dependent editing activities. One activity is designated as 'pretransfer' editing and involves the hydrolysis of activated Val-AMP. The other activity is designated 'posttransfer' editing and involves deacylation of mischarged Val-tRNA(Ile). This is Isoleucine--tRNA ligase from Streptococcus pneumoniae (strain CGSP14).